The chain runs to 958 residues: Glycine dehydrogenase (decarboxylating) 2 (958 aa).

Lysine 707 bears the N6-(pyridoxal phosphate)lysine mark.

The protein belongs to the GcvP family. The glycine cleavage system is composed of four proteins: P, T, L and H. Requires pyridoxal 5'-phosphate as cofactor.

It carries out the reaction N(6)-[(R)-lipoyl]-L-lysyl-[glycine-cleavage complex H protein] + glycine + H(+) = N(6)-[(R)-S(8)-aminomethyldihydrolipoyl]-L-lysyl-[glycine-cleavage complex H protein] + CO2. Its function is as follows. The glycine cleavage system catalyzes the degradation of glycine. The P protein binds the alpha-amino group of glycine through its pyridoxal phosphate cofactor; CO(2) is released and the remaining methylamine moiety is then transferred to the lipoamide cofactor of the H protein. The polypeptide is Glycine dehydrogenase (decarboxylating) 2 (gcvP2) (Pseudomonas aeruginosa (strain ATCC 15692 / DSM 22644 / CIP 104116 / JCM 14847 / LMG 12228 / 1C / PRS 101 / PAO1)).